The sequence spans 239 residues: Increased recombination centers protein 22-2 (239 aa).

The signal sequence occupies residues 1-19 (MKLSTIFTAFAATIATVAG). The Lumenal portion of the chain corresponds to 20–161 (YETTGSKQTV…AAVSFFDPRL (142 aa)). A helical membrane pass occupies residues 162-182 (IFLELVLLITFAGLIYVGYEI). Residues 183–239 (WGKQYFKGVAPVKAKKVSAAKASSPVATGPSTTSATGYDTNWIPESHLKQKKTKKVN) are Cytoplasmic-facing. Residues 202-222 (AKASSPVATGPSTTSATGYDT) form a disordered region. Polar residues predominate over residues 211-221 (GPSTTSATGYD).

This sequence belongs to the IRC22 family.

It is found in the endoplasmic reticulum membrane. In terms of biological role, is probably involved in a pathway contributing to genomic integrity. The polypeptide is Increased recombination centers protein 22-2 (IRC22-2) (Candida albicans (strain SC5314 / ATCC MYA-2876) (Yeast)).